Reading from the N-terminus, the 767-residue chain is MPVFTASFQCVTLFGQPASAADAQPLLQGQRPFLHLHARRRRPCGPMLISKSPPYPASEETREWEAEGQHEHTDELRETTTTMIDGIRTALRSIGEGEISISAYDTSLVALLKRLDGGDGPQFPSTIDWIVQNQLPDGSWGDASFFMMGDRIMSTLACVVALKSWNIHTDKCERGLLFIQENMWRLAHEEEDWMLVGFEIALPSLLDMAKDLDLDIPYDEPALKAIYAERERKLAKIPRDVLHAMPTTLLHSLEGMVDLDWEKLLKLRCLDGSFHCSPASTATAFQQTGDQKCFEYLDGIVKKFNGGVPCIYPLDVYERLWAVDRLTRLGISRHFTSEIEDCLDYIFRNWTPDGLAHTKNCPVKDIDDTAMGFRLLRLYGYQVDPCVLKKFEKDGKFFCLHGESNPSSVTPMYNTYRASQLKFPGDDGVLGRAEVFCRSFLQDRRGSNRMKDKWAIAKDIPGEVEYAMDYPWKASLPRIETRLYLDQYGGSGDVWIGKVLHRMTLFCNDLYLKAAKADFSNFQKECRVELNGLRRWYLRSNLERFGGTDPQTTLMTSYFLASANIFEPNRAAERLGWARVALLADAVSSHFRRIGGPKNLTSNLEELISLVPFDDAYSGSLREAWKQWLMAWTAKESSQESIEGDTAILLVRAIEIFGGRHVLTGQRPDLWEYSQLEQLTSSICRKLYRRVLAQENGKSTEKVEEIDQQLDLEMQELTRRVLQGCSAINRLTRETFLHVVKSFCYVAYCSPETIDNHIDKVIFQDVI.

Residues 45-74 are disordered; sequence GPMLISKSPPYPASEETREWEAEGQHEHTD. The segment covering 59 to 74 has biased composition (basic and acidic residues); it reads EETREWEAEGQHEHTD. Lysine 233 serves as a coordination point for substrate. Mg(2+) is bound by residues aspartate 365 and aspartate 367. Residues 365–368 carry the DXDD motif motif; that stretch reads DIDD. A substrate-binding site is contributed by lysine 453.

The cofactor is Mg(2+).

The catalysed reaction is (2E,6E,10E)-geranylgeranyl diphosphate = 9alpha-copalyl diphosphate. Its function is as follows. Catalyzes the conversion of geranylgeranyl diphosphate to the phytoalexin precursor syn-copalyl diphosphate. In Oryza sativa subsp. indica (Rice), this protein is Syn-copalyl diphosphate synthase (CPS4).